The sequence spans 87 residues: Phosphoribosyl-ATP pyrophosphatase (87 aa).

Belongs to the PRA-PH family.

Its subcellular location is the cytoplasm. It catalyses the reaction 1-(5-phospho-beta-D-ribosyl)-ATP + H2O = 1-(5-phospho-beta-D-ribosyl)-5'-AMP + diphosphate + H(+). Its pathway is amino-acid biosynthesis; L-histidine biosynthesis; L-histidine from 5-phospho-alpha-D-ribose 1-diphosphate: step 2/9. The polypeptide is Phosphoribosyl-ATP pyrophosphatase (Salinibacter ruber (strain DSM 13855 / M31)).